The chain runs to 323 residues: ATP synthase gamma chain (323 aa).

The protein belongs to the ATPase gamma chain family. F-type ATPases have 2 components, CF(1) - the catalytic core - and CF(0) - the membrane proton channel. CF(1) has five subunits: alpha(3), beta(3), gamma(1), delta(1), epsilon(1). CF(0) has three main subunits: a, b and c.

Its subcellular location is the cell inner membrane. Produces ATP from ADP in the presence of a proton gradient across the membrane. The gamma chain is believed to be important in regulating ATPase activity and the flow of protons through the CF(0) complex. This Rickettsia rickettsii (strain Iowa) protein is ATP synthase gamma chain.